The primary structure comprises 265 residues: Tryptophan synthase alpha chain (265 aa).

Active-site proton acceptor residues include glutamate 48 and aspartate 59.

It belongs to the TrpA family. Tetramer of two alpha and two beta chains.

The catalysed reaction is (1S,2R)-1-C-(indol-3-yl)glycerol 3-phosphate + L-serine = D-glyceraldehyde 3-phosphate + L-tryptophan + H2O. It participates in amino-acid biosynthesis; L-tryptophan biosynthesis; L-tryptophan from chorismate: step 5/5. Functionally, the alpha subunit is responsible for the aldol cleavage of indoleglycerol phosphate to indole and glyceraldehyde 3-phosphate. The chain is Tryptophan synthase alpha chain from Ruthia magnifica subsp. Calyptogena magnifica.